Consider the following 385-residue polypeptide: Probable dual-specificity RNA methyltransferase RlmN (385 aa).

Residues 1–35 (MNVKEPAEEAAIQLRTERQRIEPEGEEQSEQPTDL) are disordered. Glutamate 121 functions as the Proton acceptor in the catalytic mechanism. Residues 132–367 (TRDRVTVCLS…AVIREERGQD (236 aa)) enclose the Radical SAM core domain. Cysteine 139 and cysteine 372 are oxidised to a cystine. Positions 146, 150, and 153 each coordinate [4Fe-4S] cluster. S-adenosyl-L-methionine is bound by residues 198–199 (GE), serine 230, 253–255 (SLH), and asparagine 329. Cysteine 372 (S-methylcysteine intermediate) is an active-site residue.

It belongs to the radical SAM superfamily. RlmN family. The cofactor is [4Fe-4S] cluster.

Its subcellular location is the cytoplasm. The enzyme catalyses adenosine(2503) in 23S rRNA + 2 reduced [2Fe-2S]-[ferredoxin] + 2 S-adenosyl-L-methionine = 2-methyladenosine(2503) in 23S rRNA + 5'-deoxyadenosine + L-methionine + 2 oxidized [2Fe-2S]-[ferredoxin] + S-adenosyl-L-homocysteine. The catalysed reaction is adenosine(37) in tRNA + 2 reduced [2Fe-2S]-[ferredoxin] + 2 S-adenosyl-L-methionine = 2-methyladenosine(37) in tRNA + 5'-deoxyadenosine + L-methionine + 2 oxidized [2Fe-2S]-[ferredoxin] + S-adenosyl-L-homocysteine. Specifically methylates position 2 of adenine 2503 in 23S rRNA and position 2 of adenine 37 in tRNAs. The chain is Probable dual-specificity RNA methyltransferase RlmN from Heliobacterium modesticaldum (strain ATCC 51547 / Ice1).